The sequence spans 291 residues: uncharacterized protein (291 aa).

This sequence belongs to the PhyH family.

This is an uncharacterized protein from Mycobacterium bovis (strain ATCC BAA-935 / AF2122/97).